The following is a 762-amino-acid chain: Ribosome-releasing factor 2, mitochondrial (762 aa).

The N-terminal 35 residues, 1-35, are a transit peptide targeting the mitochondrion; that stretch reads MLLSLTFPVLRGCTGHLVNRSLQAPRWRVTWKRSY. Positions 54–341 constitute a tr-type G domain; the sequence is SKIRNIGIMA…AITAYLPAPN (288 aa). GTP is bound by residues 63–70, 127–131, and 181–184; these read AHIDAGKT, DTPGH, and NKMD.

It belongs to the TRAFAC class translation factor GTPase superfamily. Classic translation factor GTPase family. EF-G/EF-2 subfamily.

Its subcellular location is the mitochondrion. The enzyme catalyses GTP + H2O = GDP + phosphate + H(+). Mitochondrial GTPase that mediates the disassembly of ribosomes from messenger RNA at the termination of mitochondrial protein biosynthesis. Acts in collaboration with mrrf. GTP hydrolysis follows the ribosome disassembly and probably occurs on the ribosome large subunit. Not involved in the GTP-dependent ribosomal translocation step during translation elongation. This Danio rerio (Zebrafish) protein is Ribosome-releasing factor 2, mitochondrial (gfm2).